Consider the following 406-residue polypeptide: MTETSYRTGPDEKGLFGRFGGQYVAETLMPLILDLAEEYERAKVDPAFLEELAYFQRDYVGRPSPLYFAERLTEHCGGAKIYLKREELNHTGAHKINNCIGQILLARRMGKQRIIAETGAGMHGVATATVAARFGLQCVIYMGTTDIDRQQANVFRMKLLGAEVIPVTAGTGTLKDAMNEALRDWVTNVETTFYLIGTVAGPHPYPAMVRDFQAVIGKETREQLIEKEGRLPDSLVACIGGGSNAMGLFHPFLDEPGVKIVGVEAAGHGIETGKHAASLNGGVPGVLHGNRTFLLQDADGQIIDAHSISAGLDYPGIGPEHAWLHDIGRVEYSSITDHEALQAFHTCCRLEGIIPALESSHALAEVFKRAPRLPKDHLMVVNLSGRGDKDMQTVMHHMQEKLEKHA.

Residue Lys95 is modified to N6-(pyridoxal phosphate)lysine.

Belongs to the TrpB family. Tetramer of two alpha and two beta chains. Requires pyridoxal 5'-phosphate as cofactor.

The enzyme catalyses (1S,2R)-1-C-(indol-3-yl)glycerol 3-phosphate + L-serine = D-glyceraldehyde 3-phosphate + L-tryptophan + H2O. It functions in the pathway amino-acid biosynthesis; L-tryptophan biosynthesis; L-tryptophan from chorismate: step 5/5. Its function is as follows. The beta subunit is responsible for the synthesis of L-tryptophan from indole and L-serine. This chain is Tryptophan synthase beta chain, found in Azotobacter vinelandii (strain DJ / ATCC BAA-1303).